The chain runs to 98 residues: NADH-ubiquinone oxidoreductase chain 4L (98 aa).

A run of 3 helical transmembrane segments spans residues 1–21, 29–49, and 61–81; these read MPFI…GLLI, SLLC…LMTL, and IVLL…LVLI.

Belongs to the complex I subunit 4L family. As to quaternary structure, core subunit of respiratory chain NADH dehydrogenase (Complex I) which is composed of 45 different subunits.

Its subcellular location is the mitochondrion inner membrane. The enzyme catalyses a ubiquinone + NADH + 5 H(+)(in) = a ubiquinol + NAD(+) + 4 H(+)(out). Functionally, core subunit of the mitochondrial membrane respiratory chain NADH dehydrogenase (Complex I) which catalyzes electron transfer from NADH through the respiratory chain, using ubiquinone as an electron acceptor. Part of the enzyme membrane arm which is embedded in the lipid bilayer and involved in proton translocation. The chain is NADH-ubiquinone oxidoreductase chain 4L (MT-ND4L) from Aotus trivirgatus (Three-striped night monkey).